A 98-amino-acid polypeptide reads, in one-letter code: Small ribosomal subunit protein bS20 (98 aa).

The span at 1–12 (MAPRKPSKKVGP) shows a compositional bias: basic residues. The interval 1-31 (MAPRKPSKKVGPQKRPSAEKRVITSKKKQLR) is disordered.

Belongs to the bacterial ribosomal protein bS20 family.

Binds directly to 16S ribosomal RNA. In Chlamydia trachomatis serovar A (strain ATCC VR-571B / DSM 19440 / HAR-13), this protein is Small ribosomal subunit protein bS20.